The primary structure comprises 283 residues: Putative S-adenosyl-L-methionine-dependent methyltransferase SCO7813 (283 aa).

S-adenosyl-L-methionine contacts are provided by residues Asp121 and 150–151; that span reads DL. The disordered stretch occupies residues 264–283; that stretch reads MSTLPQHEDGPGGLISAVRR.

It belongs to the UPF0677 family.

Functionally, exhibits S-adenosyl-L-methionine-dependent methyltransferase activity. The polypeptide is Putative S-adenosyl-L-methionine-dependent methyltransferase SCO7813 (Streptomyces coelicolor (strain ATCC BAA-471 / A3(2) / M145)).